We begin with the raw amino-acid sequence, 159 residues long: MQKRAIYPGTFDPITNGHLDIVTRATQMFDHVILAIAASPGKKPMFTLEERVALAQKATAHLGNVEVVGFSDLMANFARDRQANILIRGLRAVADFEYEMQLAHMNRHLMPQLESVFLMPSKEWSFISSSLVKEVARHQGDVTHFLPDNVHQALMDKLK.

T10 serves as a coordination point for substrate. Residues T10–F11 and H18 each bind ATP. Substrate contacts are provided by K42, M74, and R88. Residues G89–R91, E99, and W124–S130 each bind ATP.

The protein belongs to the bacterial CoaD family. In terms of assembly, homohexamer. Mg(2+) is required as a cofactor.

It localises to the cytoplasm. It carries out the reaction (R)-4'-phosphopantetheine + ATP + H(+) = 3'-dephospho-CoA + diphosphate. It participates in cofactor biosynthesis; coenzyme A biosynthesis; CoA from (R)-pantothenate: step 4/5. In terms of biological role, reversibly transfers an adenylyl group from ATP to 4'-phosphopantetheine, yielding dephospho-CoA (dPCoA) and pyrophosphate. This Salmonella agona (strain SL483) protein is Phosphopantetheine adenylyltransferase.